Here is a 394-residue protein sequence, read N- to C-terminus: Phosphopentomutase (394 aa).

Residues D13, D286, H291, D327, H328, and H339 each contribute to the Mn(2+) site.

This sequence belongs to the phosphopentomutase family. Requires Mn(2+) as cofactor.

The protein localises to the cytoplasm. It catalyses the reaction 2-deoxy-alpha-D-ribose 1-phosphate = 2-deoxy-D-ribose 5-phosphate. The enzyme catalyses alpha-D-ribose 1-phosphate = D-ribose 5-phosphate. Its pathway is carbohydrate degradation; 2-deoxy-D-ribose 1-phosphate degradation; D-glyceraldehyde 3-phosphate and acetaldehyde from 2-deoxy-alpha-D-ribose 1-phosphate: step 1/2. Isomerase that catalyzes the conversion of deoxy-ribose 1-phosphate (dRib-1-P) and ribose 1-phosphate (Rib-1-P) to deoxy-ribose 5-phosphate (dRib-5-P) and ribose 5-phosphate (Rib-5-P), respectively. This chain is Phosphopentomutase, found in Bacillus cereus (strain G9842).